The primary structure comprises 156 residues: Small ribosomal subunit protein uS7 (156 aa).

It belongs to the universal ribosomal protein uS7 family. Part of the 30S ribosomal subunit. Contacts proteins S9 and S11.

One of the primary rRNA binding proteins, it binds directly to 16S rRNA where it nucleates assembly of the head domain of the 30S subunit. Is located at the subunit interface close to the decoding center, probably blocks exit of the E-site tRNA. This chain is Small ribosomal subunit protein uS7, found in Citrobacter koseri (strain ATCC BAA-895 / CDC 4225-83 / SGSC4696).